Consider the following 202-residue polypeptide: Ribonuclease HII (202 aa).

The RNase H type-2 domain maps to 14–202; that stretch reads LPLAGVDEAG…VAQFSLFPAA (189 aa). A divalent metal cation is bound by residues Asp20, Glu21, and Asp111.

The protein belongs to the RNase HII family. It depends on Mn(2+) as a cofactor. Mg(2+) serves as cofactor.

The protein resides in the cytoplasm. It catalyses the reaction Endonucleolytic cleavage to 5'-phosphomonoester.. Its function is as follows. Endonuclease that specifically degrades the RNA of RNA-DNA hybrids. In Rhizorhabdus wittichii (strain DSM 6014 / CCUG 31198 / JCM 15750 / NBRC 105917 / EY 4224 / RW1) (Sphingomonas wittichii), this protein is Ribonuclease HII.